We begin with the raw amino-acid sequence, 194 residues long: Fimbrial protein 987P (194 aa).

An N-terminal signal peptide occupies residues 1-23; that stretch reads MRMKKSALTLAVLSSLFSGYSLA. A disulfide bridge links Cys46 with Cys85.

The protein belongs to the fimbrial protein family.

Its subcellular location is the fimbrium. In Escherichia coli, this protein is Fimbrial protein 987P (fasA).